The chain runs to 43 residues: Neurotrophic factor BDNF (43 aa).

The protein belongs to the NGF-beta family.

It is found in the secreted. In terms of biological role, promotes the survival of neuronal populations that are all located either in the central nervous system or directly connected to it. The protein is Neurotrophic factor BDNF (BDNF) of Macrovipera lebetinus (Levantine viper).